The chain runs to 529 residues: UDP-glucuronosyltransferase 2B28 (529 aa).

A signal peptide spans 1-24 (MALKWTSVLLLIHLGCYFSSGSCG). K135 bears the N6-succinyllysine mark. N-linked (GlcNAc...) asparagine glycosylation is present at N315. Residues 495–517 (GFLLACVATVIFVVTKFCLFCFW) form a helical membrane-spanning segment.

It belongs to the UDP-glycosyltransferase family. In terms of tissue distribution, expressed in the liver, breast and kidney.

It localises to the endoplasmic reticulum membrane. The protein resides in the cytoplasm. Its subcellular location is the perinuclear region. The enzyme catalyses glucuronate acceptor + UDP-alpha-D-glucuronate = acceptor beta-D-glucuronoside + UDP + H(+). In terms of biological role, UDP-glucuronosyltransferase (UGT) that catalyzes phase II biotransformation reactions in which lipophilic substrates are conjugated with glucuronic acid to increase the metabolite's water solubility, thereby facilitating excretion into either the urine or bile. Essential for the elimination and detoxification of drugs, xenobiotics and endogenous compounds. Catalyzes the glucuronidation of endogenous steroid hormones such as androgens (androsterone, 3alpha-androstanediol) and estrogens (estradiol, estrone). Catalyzes the glucuronidation of bile acid substrates, which are natural detergents for dietary lipids absorption. Displays glucuronidation activity toward the phenolic compounds eugenol. Its function is as follows. Lack UDP-glucuronosyltransferase (UGT) activity. In Homo sapiens (Human), this protein is UDP-glucuronosyltransferase 2B28.